The chain runs to 180 residues: 3-phenylpropionate/cinnamic acid dioxygenase subunit beta (180 aa).

This sequence belongs to the bacterial ring-hydroxylating dioxygenase beta subunit family. As to quaternary structure, this dioxygenase system consists of four proteins: the two subunits of the hydroxylase component (HcaE and HcaF), a ferredoxin (HcaC) and a ferredoxin reductase (HcaD).

It carries out the reaction 3-phenylpropanoate + NADH + O2 + H(+) = 3-(cis-5,6-dihydroxycyclohexa-1,3-dien-1-yl)propanoate + NAD(+). It catalyses the reaction (E)-cinnamate + NADH + O2 + H(+) = (2E)-3-(cis-5,6-dihydroxycyclohexa-1,3-dien-1-yl)prop-2-enoate + NAD(+). The protein operates within aromatic compound metabolism; 3-phenylpropanoate degradation. Its function is as follows. Part of the multicomponent 3-phenylpropionate dioxygenase. Converts 3-phenylpropionic acid (PP) and cinnamic acid (CI) into 3-phenylpropionate-dihydrodiol (PP-dihydrodiol) and cinnamic acid-dihydrodiol (CI-dihydrodiol), respectively. The chain is 3-phenylpropionate/cinnamic acid dioxygenase subunit beta from Photorhabdus laumondii subsp. laumondii (strain DSM 15139 / CIP 105565 / TT01) (Photorhabdus luminescens subsp. laumondii).